Consider the following 189-residue polypeptide: ATP-dependent protease subunit HslV (189 aa).

Thr-12 is an active-site residue. Na(+) contacts are provided by Ser-172, Cys-175, and Thr-178.

The protein belongs to the peptidase T1B family. HslV subfamily. A double ring-shaped homohexamer of HslV is capped on each side by a ring-shaped HslU homohexamer. The assembly of the HslU/HslV complex is dependent on binding of ATP.

It localises to the cytoplasm. It catalyses the reaction ATP-dependent cleavage of peptide bonds with broad specificity.. With respect to regulation, allosterically activated by HslU binding. Its function is as follows. Protease subunit of a proteasome-like degradation complex believed to be a general protein degrading machinery. In Ehrlichia chaffeensis (strain ATCC CRL-10679 / Arkansas), this protein is ATP-dependent protease subunit HslV.